The following is a 242-amino-acid chain: UPF0309 protein BOV_A0853 (242 aa).

One can recognise an SIS domain in the interval 30–209 (AADLIAAAAR…FADVAARLVG (180 aa)).

Belongs to the UPF0309 family.

The sequence is that of UPF0309 protein BOV_A0853 from Brucella ovis (strain ATCC 25840 / 63/290 / NCTC 10512).